A 118-amino-acid chain; its full sequence is MRNWRWLLLVLAALLAWLQHRFWFGPGNSGEVRMLQVQIVQQHQENERLRQRNASLAAEVKNLKDGDAAIEERARSELGMIKPGEIFYRVVEDIPAPLPNDTSADHGVDLSQPRREKR.

Over 1 to 6 (MRNWRW) the chain is Cytoplasmic. The chain crosses the membrane as a helical span at residues 7 to 24 (LLLVLAALLAWLQHRFWF). The Periplasmic portion of the chain corresponds to 25 to 118 (GPGNSGEVRM…DLSQPRREKR (94 aa)). Residues 30–66 (GEVRMLQVQIVQQHQENERLRQRNASLAAEVKNLKDG) adopt a coiled-coil conformation. Residues 98 to 118 (LPNDTSADHGVDLSQPRREKR) form a disordered region. Residues 103–118 (SADHGVDLSQPRREKR) are compositionally biased toward basic and acidic residues.

This sequence belongs to the FtsB family. As to quaternary structure, part of a complex composed of FtsB, FtsL and FtsQ.

The protein resides in the cell inner membrane. In terms of biological role, essential cell division protein. May link together the upstream cell division proteins, which are predominantly cytoplasmic, with the downstream cell division proteins, which are predominantly periplasmic. This chain is Cell division protein FtsB, found in Xylella fastidiosa (strain M12).